Reading from the N-terminus, the 702-residue chain is Serotransferrin-A (702 aa).

Residues methionine 1 to alanine 19 form the signal peptide. Transferrin-like domains are found at residues valine 26–glutamate 340 and valine 353–lysine 685. Cystine bridges form between cysteine 29–cysteine 64 and cysteine 39–cysteine 55. 2 residues coordinate Fe(3+): aspartate 79 and tyrosine 111. 3 disulfides stabilise this stretch: cysteine 134/cysteine 217, cysteine 179/cysteine 192, and cysteine 245/cysteine 259. Hydrogencarbonate contacts are provided by threonine 136, lysine 140, alanine 142, and glycine 143. Residue tyrosine 211 coordinates Fe(3+). Residue histidine 267 coordinates Fe(3+). The segment at glutamate 340–alanine 349 is connecting region. Cystine bridges form between cysteine 356–cysteine 388 and cysteine 366–cysteine 379. Residues aspartate 403 and tyrosine 442 each contribute to the Fe(3+) site. Disulfide bonds link cysteine 413-cysteine 697, cysteine 431-cysteine 658, cysteine 465-cysteine 544, cysteine 489-cysteine 686, cysteine 499-cysteine 513, cysteine 510-cysteine 527, and cysteine 584-cysteine 598. Residues threonine 467, arginine 471, alanine 473, and glycine 474 each contribute to the hydrogencarbonate site. Position 538 (tyrosine 538) interacts with Fe(3+). Fe(3+) is bound at residue histidine 606.

The protein belongs to the transferrin family. In terms of assembly, monomer. In terms of tissue distribution, plasma.

Its subcellular location is the secreted. Functionally, transferrins are iron binding transport proteins which can bind two Fe(3+) ions in association with the binding of an anion, usually bicarbonate. It is responsible for the transport of iron from sites of absorption and heme degradation to those of storage and utilization. Serum transferrin may also have a further role in stimulating cell proliferation. The protein is Serotransferrin-A (tf-a) of Xenopus laevis (African clawed frog).